A 299-amino-acid chain; its full sequence is ATP phosphoribosyltransferase (299 aa).

This sequence belongs to the ATP phosphoribosyltransferase family. Long subfamily. Mg(2+) serves as cofactor.

The protein localises to the cytoplasm. The enzyme catalyses 1-(5-phospho-beta-D-ribosyl)-ATP + diphosphate = 5-phospho-alpha-D-ribose 1-diphosphate + ATP. The protein operates within amino-acid biosynthesis; L-histidine biosynthesis; L-histidine from 5-phospho-alpha-D-ribose 1-diphosphate: step 1/9. Feedback inhibited by histidine. In terms of biological role, catalyzes the condensation of ATP and 5-phosphoribose 1-diphosphate to form N'-(5'-phosphoribosyl)-ATP (PR-ATP). Has a crucial role in the pathway because the rate of histidine biosynthesis seems to be controlled primarily by regulation of HisG enzymatic activity. The sequence is that of ATP phosphoribosyltransferase from Actinobacillus pleuropneumoniae serotype 7 (strain AP76).